Reading from the N-terminus, the 96-residue chain is Large ribosomal subunit protein bL27 (96 aa).

The propeptide occupies 1 to 9 (MLKFDIQHF). The disordered stretch occupies residues 1 to 33 (MLKFDIQHFAHKKGGGSTSNGRDSESKRLGAKR). The span at 22–33 (RDSESKRLGAKR) shows a compositional bias: basic and acidic residues.

The protein belongs to the bacterial ribosomal protein bL27 family. The N-terminus is cleaved by ribosomal processing cysteine protease Prp.

This Listeria innocua serovar 6a (strain ATCC BAA-680 / CLIP 11262) protein is Large ribosomal subunit protein bL27.